A 634-amino-acid chain; its full sequence is Chaperone protein HtpG (634 aa).

The tract at residues 1–342 (MTVETDKQTL…SSDLSLNVSR (342 aa)) is a; substrate-binding. Residues 343 to 559 (EILQSGPVVD…QGDLGLQMRQ (217 aa)) are b. The interval 560-634 (LLEASGQAVP…LNKLLLELSA (75 aa)) is c.

The protein belongs to the heat shock protein 90 family. In terms of assembly, homodimer.

Its subcellular location is the cytoplasm. Molecular chaperone. Has ATPase activity. In Xanthomonas axonopodis pv. citri (strain 306), this protein is Chaperone protein HtpG.